Here is a 276-residue protein sequence, read N- to C-terminus: Ribosomal RNA small subunit methyltransferase A (276 aa).

S-adenosyl-L-methionine is bound by residues N16, L18, G43, E64, D89, and N109.

This sequence belongs to the class I-like SAM-binding methyltransferase superfamily. rRNA adenine N(6)-methyltransferase family. RsmA subfamily.

It localises to the cytoplasm. It carries out the reaction adenosine(1518)/adenosine(1519) in 16S rRNA + 4 S-adenosyl-L-methionine = N(6)-dimethyladenosine(1518)/N(6)-dimethyladenosine(1519) in 16S rRNA + 4 S-adenosyl-L-homocysteine + 4 H(+). In terms of biological role, specifically dimethylates two adjacent adenosines (A1518 and A1519) in the loop of a conserved hairpin near the 3'-end of 16S rRNA in the 30S particle. May play a critical role in biogenesis of 30S subunits. This is Ribosomal RNA small subunit methyltransferase A from Marinobacter nauticus (strain ATCC 700491 / DSM 11845 / VT8) (Marinobacter aquaeolei).